The primary structure comprises 366 residues: MAP kinase-activated protein kinase 2 (366 aa).

The Protein kinase domain occupies 30–291; it reads KVTSQVLGLG…ITEFMNHPWI (262 aa). ATP-binding positions include 36 to 44 and Lys59; that span reads LGLGINGKV. 105–107 is a staurosporine binding site; the sequence is ECL. Residue Asp152 is the Proton acceptor of the active site. Residue Thr188 is modified to Phosphothreonine; by MAPK14. Ser238 is modified (phosphoserine; by MAPK14). Position 294 is a phosphoserine; by autocatalysis (Ser294). Residues 294–330 are autoinhibitory helix; that stretch reads STKVPQTPLHTSRVLKEDKERWEDVKEEMTSALATMR. Thr300 bears the Phosphothreonine; by MAPK14 mark. A Glycyl lysine isopeptide (Lys-Gly) (interchain with G-Cter in SUMO) cross-link involves residue Lys319. The Nuclear export signal (NES) motif lies at 322–331; it reads MTSALATMRV. Residues 332 to 356 are p38 MAPK-binding site; the sequence is DYEQIKIKKIEDASNPLLLKRRKKA. 2 consecutive short sequence motifs (bipartite nuclear localization signal) follow at residues 337 to 340 and 351 to 355; these read KIKK and KRRKK.

This sequence belongs to the protein kinase superfamily. CAMK Ser/Thr protein kinase family. In terms of assembly, heterodimer with p38-alpha/MAPK14; this heterodimer forms a stable complex: molecules are positioned 'face to face' so that the ATP-binding sites of both kinases are at the heterodimer interface. Interacts with PHC2. Interacts with HSF1. Post-translationally, sumoylation inhibits the protein kinase activity. In terms of processing, phosphorylated and activated by MAP kinase p38-alpha/MAPK14 at Thr-188, Ser-238 and Thr-300.

It is found in the cytoplasm. The protein localises to the nucleus. It carries out the reaction L-seryl-[protein] + ATP = O-phospho-L-seryl-[protein] + ADP + H(+). It catalyses the reaction L-threonyl-[protein] + ATP = O-phospho-L-threonyl-[protein] + ADP + H(+). Activated following phosphorylation by p38-alpha/MAPK14 following various stresses. Inhibited following sumoylation. Specifically inhibited by pyrrolopyridine inhibitors. Its function is as follows. Stress-activated serine/threonine-protein kinase involved in cytokine production, endocytosis, reorganization of the cytoskeleton, cell migration, cell cycle control, chromatin remodeling, DNA damage response and transcriptional regulation. Following stress, it is phosphorylated and activated by MAP kinase p38-alpha/MAPK14, leading to phosphorylation of substrates. Phosphorylates serine in the peptide sequence, Hyd-X-R-X(2)-S, where Hyd is a large hydrophobic residue. Phosphorylates ALOX5, CDC25B, CDC25C, CEP131, ELAVL1, HNRNPA0, HSP27/HSPB1, KRT18, KRT20, LIMK1, LSP1, PABPC1, PARN, PDE4A, RCSD1, RPS6KA3, TAB3 and TTP/ZFP36. Phosphorylates HSF1; leading to the interaction with HSP90 proteins and inhibiting HSF1 homotrimerization, DNA-binding and transactivation activities. Mediates phosphorylation of HSP27/HSPB1 in response to stress, leading to dissociation of HSP27/HSPB1 from large small heat-shock protein (sHsps) oligomers and impairment of their chaperone activities and ability to protect against oxidative stress effectively. Involved in inflammatory response by regulating tumor necrosis factor (TNF) and IL6 production post-transcriptionally: acts by phosphorylating AU-rich elements (AREs)-binding proteins ELAVL1, HNRNPA0, PABPC1 and TTP/ZFP36, leading to regulate the stability and translation of TNF and IL6 mRNAs. Phosphorylation of TTP/ZFP36, a major post-transcriptional regulator of TNF, promotes its binding to 14-3-3 proteins and reduces its ARE mRNA affinity leading to inhibition of dependent degradation of ARE-containing transcripts. Phosphorylates CEP131 in response to cellular stress following ultraviolet irradiation which promotes binding of CEP131 to 14-3-3 proteins and inhibits formation of novel centriolar satellites. Also involved in late G2/M checkpoint following DNA damage through a process of post-transcriptional mRNA stabilization: following DNA damage, relocalizes from nucleus to cytoplasm and phosphorylates HNRNPA0 and PARN, leading to stabilization of GADD45A mRNA. Involved in toll-like receptor signaling pathway (TLR) in dendritic cells: required for acute TLR-induced macropinocytosis by phosphorylating and activating RPS6KA3. The sequence is that of MAP kinase-activated protein kinase 2 (MAPKAPK2) from Oryctolagus cuniculus (Rabbit).